The primary structure comprises 238 residues: CD63 antigen (238 aa).

The Cytoplasmic portion of the chain corresponds to 1 to 11 (MAVEGGMKCVK). A helical transmembrane segment spans residues 12-32 (FLLYVLLLAFCACAVGLIAIG). Residues 33-51 (VAVQVVLKQAITHETTAGS) are Extracellular-facing. Residues 52-72 (LLPVVIIAVGAFLFLVAFVGC) traverse the membrane as a helical segment. Residues 73 to 81 (CGACKENYC) lie on the Cytoplasmic side of the membrane. Residues 82–102 (LMITFAIFLSLIMLVEVAVAI) form a helical membrane-spanning segment. At 103–203 (AGYVFRDQVK…TIAIWLRKNI (101 aa)) the chain is on the extracellular side. N-linked (GlcNAc...) asparagine glycans are attached at residues N116, N130, N150, and N172. A helical transmembrane segment spans residues 204 to 224 (LLVAAAALGIAFVEVLGIIFS). Residues 225-238 (CCLVKSIRSGYEVM) are Cytoplasmic-facing. The Lysosomal targeting motif signature appears at 234-238 (GYEVM).

Belongs to the tetraspanin (TM4SF) family. In terms of assembly, interacts with TIMP1 and ITGB1 and recruits TIMP1 to ITGB1. Interacts with CD9. Identified in a complex with CD9 and ITGB3. Interacts with PMEL. Interacts with KDR/VEGFR2; identified in a complex with ITGB1 and KDR/VEGFR2 and is required to recruit KDR to ITGB1 complexes. Interacts with SYT7. Post-translationally, palmitoylated at a low, basal level in unstimulated platelets. The level of palmitoylation increases when platelets are activated by thrombin (in vitro). As to expression, ubiquitous. Strongly expressed in kidney. Detected in spleen, bone marrow, peripheral blood mononuclear cells and macrophages.

Its subcellular location is the cell membrane. The protein localises to the lysosome membrane. It is found in the late endosome membrane. The protein resides in the endosome. It localises to the multivesicular body. Its subcellular location is the melanosome. The protein localises to the secreted. It is found in the extracellular exosome. The protein resides in the cell surface. In terms of biological role, functions as a cell surface receptor for TIMP1 and plays a role in the activation of cellular signaling cascades. Plays a role in the activation of ITGB1 and integrin signaling, leading to the activation of AKT, FAK/PTK2 and MAP kinases. Promotes cell survival, reorganization of the actin cytoskeleton, cell adhesion, spreading and migration, via its role in the activation of AKT and FAK/PTK2. Plays a role in VEGFA signaling via its role in regulating the internalization of KDR/VEGFR2. Plays a role in intracellular vesicular transport processes, and is required for normal trafficking of the PMEL luminal domain that is essential for the development and maturation of melanocytes. Plays a role in the adhesion of leukocytes onto endothelial cells via its role in the regulation of SELP trafficking. May play a role in mast cell degranulation in response to Ms4a2/FceRI stimulation, but not in mast cell degranulation in response to other stimuli. This is CD63 antigen (Cd63) from Mus musculus (Mouse).